A 349-amino-acid polypeptide reads, in one-letter code: UDP-N-acetylenolpyruvoylglucosamine reductase (349 aa).

The FAD-binding PCMH-type domain occupies 26-197 (FDARARVAAR…VAVTFRLPKA (172 aa)). The active site involves arginine 173. The active-site Proton donor is serine 249. The active site involves glutamate 345.

It belongs to the MurB family. FAD is required as a cofactor.

Its subcellular location is the cytoplasm. It carries out the reaction UDP-N-acetyl-alpha-D-muramate + NADP(+) = UDP-N-acetyl-3-O-(1-carboxyvinyl)-alpha-D-glucosamine + NADPH + H(+). It functions in the pathway cell wall biogenesis; peptidoglycan biosynthesis. In terms of biological role, cell wall formation. The protein is UDP-N-acetylenolpyruvoylglucosamine reductase of Burkholderia pseudomallei (strain K96243).